A 215-amino-acid chain; its full sequence is Probable phosphoglycerate mutase GpmB (215 aa).

Residues 8–15 (RHGESEWN), 21–22 (QG), R58, R60, 82–85 (ELHM), and 151–152 (GI) each bind substrate. Residue H9 is the Tele-phosphohistidine intermediate of the active site. Catalysis depends on E82, which acts as the Proton donor/acceptor.

This sequence belongs to the phosphoglycerate mutase family. GpmB subfamily.

It carries out the reaction (2R)-2-phosphoglycerate = (2R)-3-phosphoglycerate. The protein operates within carbohydrate degradation; glycolysis; pyruvate from D-glyceraldehyde 3-phosphate: step 3/5. This is Probable phosphoglycerate mutase GpmB from Photorhabdus laumondii subsp. laumondii (strain DSM 15139 / CIP 105565 / TT01) (Photorhabdus luminescens subsp. laumondii).